The primary structure comprises 138 residues: Large ribosomal subunit protein uL16 (138 aa).

This sequence belongs to the universal ribosomal protein uL16 family. Part of the 50S ribosomal subunit.

Its function is as follows. Binds 23S rRNA and is also seen to make contacts with the A and possibly P site tRNAs. This is Large ribosomal subunit protein uL16 from Hyphomonas neptunium (strain ATCC 15444).